A 169-amino-acid chain; its full sequence is Fumarase E (169 aa).

Belongs to the MtlR/FumE family.

It carries out the reaction (S)-malate = fumarate + H2O. In terms of biological role, in vitro catalyzes the addition of water to fumarate, forming malate. Cannot catalyze the reverse reaction. Cannot use the cis-isomer maleate as substrate. This chain is Fumarase E, found in Escherichia coli (strain K12).